We begin with the raw amino-acid sequence, 224 residues long: tRNA (guanine-N(7)-)-methyltransferase (224 aa).

Residues Glu-56, Glu-81, Asp-108, and Asp-131 each contribute to the S-adenosyl-L-methionine site. Asp-131 is an active-site residue. Residues Lys-135, Asp-167, and 202 to 205 (TKFE) contribute to the substrate site.

The protein belongs to the class I-like SAM-binding methyltransferase superfamily. TrmB family.

The enzyme catalyses guanosine(46) in tRNA + S-adenosyl-L-methionine = N(7)-methylguanosine(46) in tRNA + S-adenosyl-L-homocysteine. It functions in the pathway tRNA modification; N(7)-methylguanine-tRNA biosynthesis. Catalyzes the formation of N(7)-methylguanine at position 46 (m7G46) in tRNA. The polypeptide is tRNA (guanine-N(7)-)-methyltransferase (Nitrosomonas eutropha (strain DSM 101675 / C91 / Nm57)).